Consider the following 413-residue polypeptide: Ribosomal RNA large subunit methyltransferase G (413 aa).

Residues 389–413 (EAEVEQAFDTETPHPQSALYGKPKA) are disordered.

Belongs to the methyltransferase superfamily. RlmG family.

The protein localises to the cytoplasm. It carries out the reaction guanosine(1835) in 23S rRNA + S-adenosyl-L-methionine = N(2)-methylguanosine(1835) in 23S rRNA + S-adenosyl-L-homocysteine + H(+). Functionally, specifically methylates the guanine in position 1835 (m2G1835) of 23S rRNA. The protein is Ribosomal RNA large subunit methyltransferase G of Shewanella pealeana (strain ATCC 700345 / ANG-SQ1).